The following is a 360-amino-acid chain: GDSL esterase/lipase At1g06990 (360 aa).

The signal sequence occupies residues 1 to 22 (MLIHVIIFMIITTMQFSTTCHA). Residues N26 and N31 are each glycosylated (N-linked (GlcNAc...) asparagine). S44 acts as the Nucleophile in catalysis. 3 N-linked (GlcNAc...) asparagine glycosylation sites follow: N73, N126, and N272. Active-site residues include D335 and H338.

Belongs to the 'GDSL' lipolytic enzyme family.

It is found in the secreted. This Arabidopsis thaliana (Mouse-ear cress) protein is GDSL esterase/lipase At1g06990.